An 83-amino-acid polypeptide reads, in one-letter code: Neurotoxin LmNaTx34.5 (83 aa).

The N-terminal stretch at 1-15 (FILVVIALMVIEVKS) is a signal peptide. One can recognise an LCN-type CS-alpha/beta domain in the interval 16–82 (DGYLMVRAGR…IWTYEKNTCS (67 aa)). 4 disulfides stabilise this stretch: Cys-29–Cys-81, Cys-33–Cys-54, Cys-40–Cys-61, and Cys-44–Cys-63.

Belongs to the long (4 C-C) scorpion toxin superfamily. Sodium channel inhibitor family. Beta subfamily. As to expression, expressed by the venom gland.

It localises to the secreted. Functionally, binds voltage-independently at site-4 of sodium channels (Nav) and shift the voltage of activation toward more negative potentials thereby affecting sodium channel activation and promoting spontaneous and repetitive firing. This chain is Neurotoxin LmNaTx34.5, found in Lychas mucronatus (Chinese swimming scorpion).